A 279-amino-acid polypeptide reads, in one-letter code: Plasmodesmata-located protein 8 (279 aa).

Residues 1 to 20 form the signal peptide; sequence MRRLFLFSLLFLFFYSSSSS. Topologically, residues 21-253 are extracellular; it reads RSSSESHIFI…PTNGDHVGKS (233 aa). Gnk2-homologous domains lie at 27 to 135 and 137 to 237; these read HIFI…TNDF and GKPD…GSGY. Cystine bridges form between Cys-34/Cys-113, Cys-89/Cys-98, Cys-101/Cys-126, Cys-148/Cys-215, Cys-191/Cys-200, and Cys-203/Cys-228. The helical transmembrane segment at 254-274 threads the bilayer; sequence IAIIVGVIAGFAILVVLLSLC. Residues 254–274 are necessary and sufficient for plasmodesmal targeting; the sequence is IAIIVGVIAGFAILVVLLSLC. Residues 275-279 lie on the Cytoplasmic side of the membrane; sequence RNSMH.

Belongs to the cysteine-rich repeat secretory protein family. Plasmodesmata-located proteins (PDLD) subfamily. Interacts with ACBP6; interaction occurs at the plasma membrane. As to quaternary structure, (Microbial infection) Interacts with Grapevine fanleaf virus (GFLV) 2B-MP. In terms of tissue distribution, highly expressed in pollen, lateral root and elongation zone. Higher expression in the reproductive tissues (flowers and buds) than in vegetative organs (leaves and stems). High expression in shoot and root phloem companion cells (at protein level).

The protein resides in the cell membrane. The protein localises to the cell junction. It localises to the plasmodesma. Its function is as follows. Modulates cell-to-cell trafficking. In Arabidopsis thaliana (Mouse-ear cress), this protein is Plasmodesmata-located protein 8.